A 338-amino-acid chain; its full sequence is Palmitoyltransferase ZDHHC15 (338 aa).

At 1 to 20 (MLAGCRVALPRGLRCCQRVL) the chain is on the cytoplasmic side. A helical membrane pass occupies residues 21–41 (SWVPVVIISLVVLWSYYAYVW). The Lumenal portion of the chain corresponds to 42–56 (ELCLVTVTNPAEKAA). The helical transmembrane segment at 57–77 (YLLIFHTVFLLFIWTYWKAIF) threads the bilayer. At 78-172 (TPPKQPTKKF…NNCIGYSNYK (95 aa)) the chain is on the cytoplasmic side. One can recognise a DHHC domain in the interval 129 to 179 (RFCDTCQMVKPDRCHHCSVCGMCVLKMDHHCPWVNNCIGYSNYKFFLLFLA). Zn(2+)-binding residues include C131, C134, H144, C145, C148, C151, and H158. C159 serves as the catalytic S-palmitoyl cysteine intermediate. Residue C165 participates in Zn(2+) binding. The chain crosses the membrane as a helical span at residues 173-193 (FFLLFLAYAMLYCLYIGCTVF). Topologically, residues 194–210 (QYFILYWTDTLSNGRAK) are lumenal. Residues 211-234 (FHVLFLLFVALMFFISLMFLFGYH) form a helical membrane-spanning segment. Residues 235–338 (CWLVSLNRTT…TSHITVHIEK (104 aa)) are Cytoplasmic-facing.

Belongs to the DHHC palmitoyltransferase family. Post-translationally, autopalmitoylated (in vitro).

It is found in the golgi apparatus membrane. Its subcellular location is the postsynaptic density. It catalyses the reaction L-cysteinyl-[protein] + hexadecanoyl-CoA = S-hexadecanoyl-L-cysteinyl-[protein] + CoA. It carries out the reaction L-cysteinyl-[protein] + tetradecanoyl-CoA = S-tetradecanoyl-L-cysteinyl-[protein] + CoA. The enzyme catalyses L-cysteinyl-[protein] + octadecanoyl-CoA = S-octadecanoyl-L-cysteinyl-[protein] + CoA. In terms of biological role, palmitoyltransferase that catalyzes the addition of palmitate onto various protein substrates. Has no stringent fatty acid selectivity and in addition to palmitate can also transfer onto target proteins myristate from tetradecanoyl-CoA and stearate from octadecanoyl-CoA. May thereby regulate target proteins association and localization to membranes. In the nervous system, probably catalyzes the palmitoylation of synaptic proteins and is involved in the differentiation of dopaminergic neurons and the development of the diencephalon. This chain is Palmitoyltransferase ZDHHC15 (zdhhc15), found in Xenopus laevis (African clawed frog).